The chain runs to 68 residues: uncharacterized protein (68 aa).

The N-terminal stretch at 1-15 is a signal peptide; the sequence is MTIIFLICLDASTQS. Positions 14-68 are disordered; the sequence is QSTTNNSINNNNNNNNNNNNNNNNNNNNNNNNNNNNNNNNNNNNNNSKVFDFNIF. N-linked (GlcNAc...) asparagine glycans are attached at residues asparagine 18 and asparagine 58. A compositionally biased stretch (low complexity) spans 22–59; the sequence is NNNNNNNNNNNNNNNNNNNNNNNNNNNNNNNNNNNNNN.

It is found in the secreted. This is an uncharacterized protein from Dictyostelium discoideum (Social amoeba).